The primary structure comprises 313 residues: Olfactory receptor 4Q3 (313 aa).

Over 1–25 (MKKEQDSNVTEFVLLGLSSSWELQL) the chain is Extracellular. N8 carries N-linked (GlcNAc...) asparagine glycosylation. The chain crosses the membrane as a helical span at residues 26–49 (FLFLLFLFFYIAIVLGNLLIVVTV). Over 50–58 (QAHAHLLQS) the chain is Cytoplasmic. The helical transmembrane segment at 59 to 80 (PMYYFLGHLSFIDLCLSCVTVP) threads the bilayer. Residues 81–101 (KMLGDFLQQGKSISFSGCLAQ) lie on the Extracellular side of the membrane. A disulfide bridge connects residues C98 and C190. Residues 102–121 (IYFLHFLGASEMFLLTVMAY) form a helical membrane-spanning segment. At 122 to 140 (DRYVAICNPLRYLTVMNPQ) the chain is on the cytoplasmic side. Residues 141-159 (LCLWLVLACWCGGFIHSIM) form a helical membrane-spanning segment. Over 160–196 (QVILVIQLPFCGPNELDNFYCDVPQVIKLACMDTYVV) the chain is Extracellular. The chain crosses the membrane as a helical span at residues 197 to 220 (EVLVIANSGLLSLVCFLVLLFSYA). Residues 221 to 236 (IILITLRTHFCQGQNK) are Cytoplasmic-facing. Residues 237 to 259 (VFSTCASHLTVVSLIFVPCVFIY) form a helical membrane-spanning segment. The Extracellular portion of the chain corresponds to 260–270 (LRPFCSFSVDK). A helical membrane pass occupies residues 271–290 (IFSLFYTVITPMLNPLIYTL). At 291 to 313 (RNTDMKTAMKKLRIKPCGIPLPC) the chain is on the cytoplasmic side.

It belongs to the G-protein coupled receptor 1 family.

The protein localises to the cell membrane. Its function is as follows. Odorant receptor. This is Olfactory receptor 4Q3 (OR4Q3) from Homo sapiens (Human).